The chain runs to 194 residues: Ribonuclease HII (194 aa).

In terms of domain architecture, RNase H type-2 spans 3-193 (ILTAGVDEAG…VRNLLAQQTL (191 aa)). A divalent metal cation-binding residues include D9, E10, and D101.

It belongs to the RNase HII family. Mn(2+) serves as cofactor. It depends on Mg(2+) as a cofactor.

It localises to the cytoplasm. The catalysed reaction is Endonucleolytic cleavage to 5'-phosphomonoester.. Functionally, endonuclease that specifically degrades the RNA of RNA-DNA hybrids. The chain is Ribonuclease HII from Neisseria meningitidis serogroup C (strain 053442).